The following is a 210-amino-acid chain: UPF0502 protein Sama_1967 (210 aa).

Belongs to the UPF0502 family.

The chain is UPF0502 protein Sama_1967 from Shewanella amazonensis (strain ATCC BAA-1098 / SB2B).